The primary structure comprises 193 residues: Transforming protein RhoA (193 aa).

GTP contacts are provided by residues 12–19 and 30–37; these read GDGACGKT and FPEVYVPT. The Effector region motif lies at 34-42; sequence YVPTVFENY. Position 41 is a (Microbial infection) ADP-ribosylasparagine; by botulinum toxin (Asn-41). GTP-binding positions include 59–63 and 117–120; these read DTAGQ and NKKD. The interval 61–78 is switch II region; involved in RAP1GDS1 isoform 2 binding; the sequence is AGQEDYDRLRPLSYPDTD. Gln-63 carries the post-translational modification 5-glutamyl serotonin. Lys-135 participates in a covalent cross-link: Glycyl lysine isopeptide (Lys-Gly) (interchain with G-Cter in ubiquitin). 160–162 serves as a coordination point for GTP; sequence SAK. Phosphoserine; by PKG/PRKG1 is present on Ser-188. Cys-190 carries the post-translational modification Cysteine methyl ester. Cys-190 carries the S-geranylgeranyl cysteine lipid modification. Residues 191 to 193 constitute a propeptide, removed in mature form; that stretch reads LVL.

The protein belongs to the small GTPase superfamily. Rho family. Interacts with ARHGEF28. Interacts (via GTP-bound form) with RIPOR1 (via N-terminus); this interaction links RHOA to STK24 and STK26 kinases. Interacts with RIPOR2 (via active GTP- or inactive GDP-bound forms) isoform 1 and isoform 2; these interactions are direct, block the loading of GTP to RHOA and decrease upon chemokine CCL19 stimulation in primary T lymphocytes. Binds PRKCL1, ROCK1 and ROCK2. Interacts with ARHGEF2, ARHGEF3, NET1 and RTKN. Interacts with PLCE1 and AKAP13. Interacts with DIAPH1. Interacts (in the constitutively activated, GTP-bound form) with DGKQ. Interacts with RACK1; enhances RHOA activation. Interacts with PKP4; the interaction is detected at the midbody. Interacts (GTP-bound form preferentially) with PKN2; the interaction stimulates autophosphorylation and phosphorylation of PKN2. Interacts with ARHGDIA; this interaction inactivates and stabilizes RHOA. Interacts with ARHGDIB. Interacts (GTP-bound form) with KCNA2 (via cytoplasmic N-terminal domain). Interacts (GTP-bound form) with ECT2; the interaction results in allosteric activation of ECT2. Interacts with RAP1GDS1; the interaction is direct and in a 1:1 stoichiometry. Mg(2+) is required as a cofactor. Post-translationally, phosphorylation by PRKG1 at Ser-188 inactivates RHOA signaling. Phosphorylation by SLK at Ser-188 in response to AGTR2 activation. In terms of processing, ubiquitinated by the BCR(KCTD13) and BCR(TNFAIP1) E3 ubiquitin ligase complexes, leading to its degradation by the proteasome, thereby regulating the actin cytoskeleton and synaptic transmission in neurons. Ubiquitinated at Lys-135 in a FBXL19-mediated manner; leading to proteasomal degradation. Serotonylation of Gln-63 by TGM2 during activation and aggregation of platelets leads to constitutive activation of GTPase activity.

The protein localises to the cell membrane. It is found in the cytoplasm. It localises to the cytoskeleton. The protein resides in the cleavage furrow. Its subcellular location is the cell cortex. The protein localises to the midbody. It is found in the cell projection. It localises to the lamellipodium. The protein resides in the dendrite. Its subcellular location is the nucleus. The catalysed reaction is GTP + H2O = GDP + phosphate + H(+). With respect to regulation, regulated by guanine nucleotide exchange factors (GEFs) which promote the exchange of bound GDP for free GTP, GTPase activating proteins (GAPs) which increase the GTP hydrolysis activity and GDP dissociation inhibitors which inhibit the dissociation of the nucleotide from the GTPase. Activated by GEFs such as ARHGEF2, ARHGEF3, ARHGEF28 and BCR. Inhibited by GAPs such as ARHGAP30. Inhibited by GDP dissociation inhibitors such as ARHGDIA. Small GTPase which cycles between an active GTP-bound and an inactive GDP-bound state. Mainly associated with cytoskeleton organization, in active state binds to a variety of effector proteins to regulate cellular responses such as cytoskeletal dynamics, cell migration and cell cycle. Regulates a signal transduction pathway linking plasma membrane receptors to the assembly of focal adhesions and actin stress fibers. Involved in a microtubule-dependent signal that is required for the myosin contractile ring formation during cell cycle cytokinesis. Plays an essential role in cleavage furrow formation. Required for the apical junction formation of keratinocyte cell-cell adhesion. Essential for the SPATA13-mediated regulation of cell migration and adhesion assembly and disassembly. The MEMO1-RHOA-DIAPH1 signaling pathway plays an important role in ERBB2-dependent stabilization of microtubules at the cell cortex. It controls the localization of APC and CLASP2 to the cell membrane, via the regulation of GSK3B activity. In turn, membrane-bound APC allows the localization of the MACF1 to the cell membrane, which is required for microtubule capture and stabilization. Regulates KCNA2 potassium channel activity by reducing its location at the cell surface in response to CHRM1 activation; promotes KCNA2 endocytosis. Acts as an allosteric activator of guanine nucleotide exchange factor ECT2 by binding in its activated GTP-bound form to the PH domain of ECT2 which stimulates the release of PH inhibition and promotes the binding of substrate RHOA to the ECT2 catalytic center. May be an activator of PLCE1. In neurons, involved in the inhibition of the initial spine growth. Upon activation by CaMKII, modulates dendritic spine structural plasticity by relaying CaMKII transient activation to synapse-specific, long-term signaling. Acts as a regulator of platelet alpha-granule release during activation and aggregation of platelets. When activated by DAAM1 may signal centrosome maturation and chromosomal segregation during cell division. May also be involved in contractile ring formation during cytokinesis. The sequence is that of Transforming protein RhoA (RHOA) from Bos taurus (Bovine).